A 1766-amino-acid chain; its full sequence is DNA-directed RNA polymerase II subunit RPB1-A (1766 aa).

Residues C69, C72, C79, and H82 each coordinate Zn(2+). Positions 487, 489, and 491 each coordinate Mg(2+). The interval P813–E825 is bridging helix. The segment at H1660–Q1766 is disordered. The segment covering R1706–D1716 has biased composition (basic and acidic residues). Residues P1742–A1756 show a composition bias toward low complexity.

This sequence belongs to the RNA polymerase beta' chain family. In terms of assembly, component of the RNA polymerase II (Pol II) complex consisting of 12 subunits.

It localises to the nucleus. It catalyses the reaction RNA(n) + a ribonucleoside 5'-triphosphate = RNA(n+1) + diphosphate. In terms of biological role, DNA-dependent RNA polymerase catalyzes the transcription of DNA into RNA using the four ribonucleoside triphosphates as substrates. Largest and catalytic component of RNA polymerase II which synthesizes mRNA precursors and many functional non-coding RNAs. Forms the polymerase active center together with the second largest subunit. Pol II is the central component of the basal RNA polymerase II transcription machinery. It is composed of mobile elements that move relative to each other. RPB1 is part of the core element with the central large cleft, the clamp element that moves to open and close the cleft and the jaws that are thought to grab the incoming DNA template. At the start of transcription, a single-stranded DNA template strand of the promoter is positioned within the central active site cleft of Pol II. A bridging helix emanates from RPB1 and crosses the cleft near the catalytic site and is thought to promote translocation of Pol II by acting as a ratchet that moves the RNA-DNA hybrid through the active site by switching from straight to bent conformations at each step of nucleotide addition. During transcription elongation, Pol II moves on the template as the transcript elongates. The protein is DNA-directed RNA polymerase II subunit RPB1-A (TRP4.8) of Trypanosoma brucei brucei.